A 198-amino-acid polypeptide reads, in one-letter code: MADNGQADRKERSNGVIVGTCLAFVAGMIGMAYAAVPLYDMFCRVTGYNGTTQRVEQASDLILDEKIKVTFDANVAAGLPWEFVPVQRDIDVRIGETVQIMYRAKNLASTPTTGQATFNVTPMAAGAYFNKVQCFCFTETTLEPGEEMEMPVVFFVDPEIVKPVETQGIKTLTLSYTFYPREPSKPVAQVKAKAENKL.

At 1 to 12 the chain is on the cytoplasmic side; it reads MADNGQADRKER. A helical; Signal-anchor for type II membrane protein membrane pass occupies residues 13 to 35; sequence SNGVIVGTCLAFVAGMIGMAYAA. The Periplasmic segment spans residues 36–198; sequence VPLYDMFCRV…QVKAKAENKL (163 aa).

It belongs to the COX11/CtaG family.

It localises to the cell inner membrane. Its function is as follows. Exerts its effect at some terminal stage of cytochrome c oxidase synthesis, probably by being involved in the insertion of the copper B into subunit I. This Rhizobium meliloti (strain 1021) (Ensifer meliloti) protein is Cytochrome c oxidase assembly protein CtaG.